Here is a 328-residue protein sequence, read N- to C-terminus: uncharacterized protein (328 aa).

Positions 37–179 (LTEKLLCHQG…AMTLLRCRKI (143 aa)) constitute an SIS domain. 52–57 (GIGKSG) provides a ligand contact to ATP. CBS domains are found at residues 207-264 (PRTE…GGDI) and 273-328 (MTRN…AGLL).

The protein belongs to the SIS family. GutQ/KpsF subfamily.

This is an uncharacterized protein from Chlamydia trachomatis serovar D (strain ATCC VR-885 / DSM 19411 / UW-3/Cx).